Reading from the N-terminus, the 481-residue chain is Putative F-box/FBD/LRR-repeat protein At5g25850 (481 aa).

Residues 19-69 (INRLSQLSDPLICQILSHLPIKEVVTTSVLSTRWKNIWLSVPSLELIYSIF) enclose the F-box domain. LRR repeat units follow at residues 123 to 151 (VRRV…KLFH), 173 to 198 (VWFP…KIDV), and 328 to 356 (HVTL…IVAF). The FBD domain maps to 401 to 452 (QLSFSSVPKCLLSSLQFVELNAQILRFDGEILNLAKYFLENSSILQKLTLHP).

The chain is Putative F-box/FBD/LRR-repeat protein At5g25850 from Arabidopsis thaliana (Mouse-ear cress).